The sequence spans 198 residues: Phage-like element PBSX protein XkdA (198 aa).

To B.subtilis YqaB.

The sequence is that of Phage-like element PBSX protein XkdA (xkdA) from Bacillus subtilis (strain 168).